The sequence spans 265 residues: Undecaprenyl-diphosphatase (265 aa).

8 helical membrane-spanning segments follow: residues 7–27 (IIVSIIIGVIEGITEFLPISS), 45–65 (TKILEIFIEFGSALSILYFFH), 86–106 (LHIILAILPTIFFGLLFYKKI), 108–128 (LLFNTYNVMYALILGGIFLLI), 145–165 (ISLLQSAIIGFFQIFCLYPGF), 186–206 (IEFSFIISIPLIMGASFYDFI), 214–234 (ILDLPIFFIGFMISFIVSILC), and 245–265 (TSLIFFGIYRFIISGLIYFIN).

Belongs to the UppP family.

Its subcellular location is the cell membrane. The catalysed reaction is di-trans,octa-cis-undecaprenyl diphosphate + H2O = di-trans,octa-cis-undecaprenyl phosphate + phosphate + H(+). Catalyzes the dephosphorylation of undecaprenyl diphosphate (UPP). Confers resistance to bacitracin. The chain is Undecaprenyl-diphosphatase from Buchnera aphidicola subsp. Acyrthosiphon pisum (strain Tuc7).